The following is a 143-amino-acid chain: Mediator of RNA polymerase II transcription subunit 22 (143 aa).

It belongs to the Mediator complex subunit 22 family. In terms of assembly, component of the Mediator complex, which includes at least CDK8, MED4, MED6, MED11, MED14, MED17, MED18, MED20, MED21, MED22, MED27, MED28, MED30 and MED31.

It is found in the nucleus. Its function is as follows. Component of the Mediator complex, a coactivator involved in the regulated transcription of nearly all RNA polymerase II-dependent genes. Mediator functions as a bridge to convey information from gene-specific regulatory proteins to the basal RNA polymerase II transcription machinery. Mediator is recruited to promoters by direct interactions with regulatory proteins and serves as a scaffold for the assembly of a functional preinitiation complex with RNA polymerase II and the general transcription factors. This Drosophila melanogaster (Fruit fly) protein is Mediator of RNA polymerase II transcription subunit 22 (MED22).